The chain runs to 196 residues: Penicillin-binding protein activator LpoB (196 aa).

An N-terminal signal peptide occupies residues 1-16 (MKKYLGIVLMALVIAG). C17 carries N-palmitoyl cysteine lipidation. A lipid anchor (S-diacylglycerol cysteine) is attached at C17. The segment at 24 to 54 (TEQPATIEPAVPTPSKPQLPPSESQPLPTPP) is disordered. The segment covering 34-43 (VPTPSKPQLP) has biased composition (pro residues).

This sequence belongs to the LpoB family. Interacts with PBP1b.

It localises to the cell outer membrane. Regulator of peptidoglycan synthesis that is essential for the function of penicillin-binding protein 1B (PBP1b). This chain is Penicillin-binding protein activator LpoB, found in Dickeya dadantii (strain 3937) (Erwinia chrysanthemi (strain 3937)).